We begin with the raw amino-acid sequence, 257 residues long: UPF0246 protein Shew185_1115 (257 aa).

This sequence belongs to the UPF0246 family.

This is UPF0246 protein Shew185_1115 from Shewanella baltica (strain OS185).